The primary structure comprises 252 residues: MFS-type transporter cctQ (252 aa).

2 helical membrane-spanning segments follow: residues Ile-54–Pro-74 and Phe-116–Phe-136. Asn-179 carries an N-linked (GlcNAc...) asparagine glycan. Helical transmembrane passes span Phe-180 to Ala-200 and Phe-208 to Thr-228.

Belongs to the major facilitator superfamily.

Its subcellular location is the membrane. It participates in mycotoxin biosynthesis. Its function is as follows. MFS-type transporter; part of the gene cluster that mediates the biosynthesis of the mycotoxin cyclochlorotine, a hepatotoxic and carcinogenic cyclic chlorinated pentapeptide. Most likely responsible for cyclochlorotine secretion and thereby may contribute to intrinsic resistance. This chain is MFS-type transporter cctQ, found in Talaromyces islandicus (Penicillium islandicum).